The sequence spans 808 residues: DNA replication licensing factor MCM3 (808 aa).

Position 2 is an N-acetylalanine (Ala2). A phosphoserine mark is found at Ser160 and Ser275. Position 293 is an N6-acetyllysine (Lys293). In terms of domain architecture, MCM spans 295-502; it reads IFDQLARSLA…QDREISDHVL (208 aa). ADP-binding residues include Gln353, Leu393, Glu394, Ala395, and Ala397. The Arginine finger motif lies at 477 to 480; it reads SRFD. Ala523 serves as a coordination point for ATP. The residue at position 535 (Ser535) is a Phosphoserine; by ATM. The residue at position 547 (Lys547) is an N6-acetyllysine. A Phosphoserine modification is found at Ser611. The interval 662 to 739 is disordered; sequence KKRKKRSEDE…ETKESQKVEL (78 aa). Arg664 lines the ATP pocket. Residues Ser668, Ser672, and Ser681 each carry the phosphoserine modification. The span at 679 to 688 shows a compositional bias: basic and acidic residues; sequence EKSQEDQEQK. Tyr708 is modified (phosphotyrosine). Residues Thr713 and Thr722 each carry the phosphothreonine modification. Basic and acidic residues predominate over residues 727 to 739; the sequence is DSQETKESQKVEL. Residues Ser728 and Ser734 each carry the phosphoserine modification.

Belongs to the MCM family. In terms of assembly, component of the MCM2-7 complex. The complex forms a toroidal hexameric ring with the proposed subunit order MCM2-MCM6-MCM4-MCM7-MCM3-MCM5. Component of the CMG helicase complex, a hexameric ring of related MCM2-7 subunits stabilized by CDC45 and the tetrameric GINS complex. Associated with the replication-specific DNA polymerase alpha. Interacts with MCMBP. Interacts with ANKRD17. Interacts with MCM3AP isoform MCM3AP; this interaction leads to MCM3 acetylation. Acetylated by MCM3AP. In terms of processing, O-glycosylated (O-GlcNAcylated), in a cell cycle-dependent manner.

It localises to the nucleus. Its subcellular location is the chromosome. The enzyme catalyses ATP + H2O = ADP + phosphate + H(+). Its function is as follows. Acts as a component of the MCM2-7 complex (MCM complex) which is the replicative helicase essential for 'once per cell cycle' DNA replication initiation and elongation in eukaryotic cells. Core component of CDC45-MCM-GINS (CMG) helicase, the molecular machine that unwinds template DNA during replication, and around which the replisome is built. The active ATPase sites in the MCM2-7 ring are formed through the interaction surfaces of two neighboring subunits such that a critical structure of a conserved arginine finger motif is provided in trans relative to the ATP-binding site of the Walker A box of the adjacent subunit. The six ATPase active sites, however, are likely to contribute differentially to the complex helicase activity. Required for the entry in S phase and for cell division. The sequence is that of DNA replication licensing factor MCM3 (MCM3) from Bos taurus (Bovine).